A 531-amino-acid polypeptide reads, in one-letter code: Zinc finger protein 692 (531 aa).

The span at 155 to 178 (EAQGLECEQRERTQETRLSRRVDS) shows a compositional bias: basic and acidic residues. Disordered stretches follow at residues 155 to 249 (EAQG…PATL) and 287 to 307 (MTES…PTWD). Residues 186–206 (LGEDQDVEEEEEEEEEEEELL) are compositionally biased toward acidic residues. A Phosphoserine modification is found at serine 231. Residues 290-303 (SLESPGSQAQSAPN) are compositionally biased toward polar residues. 5 C2H2-type zinc fingers span residues 327–352 (MPCD…KYQH), 358–382 (FCCP…VKLH), 388–410 (YICE…RRIH), 416–438 (LQCE…RRKH), and 447–470 (FPCE…SKSH). At serine 469 the chain carries Phosphoserine. A disordered region spans residues 474–531 (LPAQEPPGSLVSSPSISAPESLQSPEGASISTTSDSNPASSTSISSPGVPDPRNREKS). The segment covering 483–499 (LVSSPSISAPESLQSPE) has biased composition (polar residues). The span at 502-520 (SISTTSDSNPASSTSISSP) shows a compositional bias: low complexity.

Belongs to the krueppel C2H2-type zinc-finger protein family. Post-translationally, phosphorylation at Ser-469 results in loss of DNA-binding activity.

The protein localises to the nucleus. Its function is as follows. May act as an transcriptional repressor for PCK1 gene expression, in turn may participate in the hepatic gluconeogenesis regulation through the activated AMPK signaling pathway. The chain is Zinc finger protein 692 from Mus musculus (Mouse).